The following is a 220-amino-acid chain: Probable 26S proteasome regulatory subunit p27 (220 aa).

In terms of domain architecture, PDZ spans 119-196 (ARRNNDDQAI…PVLLLREGQI (78 aa)).

The protein belongs to the proteasome subunit p27 family. In terms of assembly, part of a transient complex containing NAS2, RPT4 and RPT5 formed during the assembly of the 26S proteasome.

In terms of biological role, acts as a chaperone during the assembly of the 26S proteasome, specifically of the base subcomplex of the 19S regulatory complex (RC). During the base subcomplex assembly is part of a NAS2:RPT4:RPT5 module; NAS2 is released during the further base assembly process. The chain is Probable 26S proteasome regulatory subunit p27 (NAS2) from Saccharomyces cerevisiae (strain ATCC 204508 / S288c) (Baker's yeast).